A 194-amino-acid chain; its full sequence is Fatty acid metabolism regulator protein (194 aa).

The HTH tetR-type domain occupies 5–65; it reads RPKYMQIIDA…SLFKEKMGQF (61 aa). The H-T-H motif DNA-binding region spans 28-47; that stretch reads QVSKIAKQAGVADGTIYLYF.

Homodimer. Binds to DNA.

It localises to the cytoplasm. Its function is as follows. Transcriptional regulator in fatty acid degradation. Represses transcription of genes required for fatty acid transport and beta-oxidation, including acdA, fadA, fadB, fadE, fadF, fadG, fadH, fadM, fadN, lcfA and lcfB. Binding of FadR to DNA is specifically inhibited by long chain fatty acyl-CoA compounds of 14-20 carbon atoms in length. The polypeptide is Fatty acid metabolism regulator protein (fadR) (Bacillus subtilis (strain 168)).